Here is a 602-residue protein sequence, read N- to C-terminus: MSLFRLYTRVLELLGKERRLGWTLAVANLLLATAQFAEPVLFGRIIDVMSGNLATGALVPETRSPWPLLAAWVGFGLFTILCSATVALHADRLAHRQRQAVLTSYFEHILQLPLTFHTGTHSGRLMKVMLQGTDALWRVWLGFFREHFAAILSLVVLLPLSLYINWRLAILLFALCGVFTVLTTLVVRKTYGMQNEVEAQYSDLSARASDALGNVALVQSYVRVDAEVQGLRFVADKLLAAQMPVLSWWALVTVITRASTTITVLAIFSLGIALNQQGLTSVGEIVMFVSFATLLIQRLEQVVSFVNSLMMEAPRLQEFITVLDAVPAVRDRPDAIDPGRLSGLVEFLDVSFSYDGKRPAIEDLSFTALPGQTIALVGATGAGKSTAIALLHRAFDPQSGVVKIDGMDVRGLTMSGLRRNIGVVFQEALLFNRSIAENLRVGKPDATDAELRLAAERAQALDFIDRNDLGFDTNAGERGRMLSGGERQRLSIARALLKDPPILILDEATSALDAVTEAKVNLALDEVMKGRTTFVIAHRLSTIRHATRILVFDNGKVIESGTFDELVAQRGRFAELARAQFMVQEEARAAVATATDDAPVRL.

The ABC transmembrane type-1 domain occupies 21–311 (GWTLAVANLL…VVSFVNSLMM (291 aa)). The next 6 membrane-spanning stretches (helical) occupy residues 22–42 (WTLAVANLLLATAQFAEPVLF), 68–88 (LLAAWVGFGLFTILCSATVAL), 146–166 (EHFAAILSLVVLLPLSLYINW), 167–187 (RLAILLFALCGVFTVLTTLVV), 254–274 (VITRASTTITVLAIFSLGIAL), and 276–296 (QQGLTSVGEIVMFVSFATLLI). One can recognise an ABC transporter domain in the interval 345 to 579 (VEFLDVSFSY…RGRFAELARA (235 aa)). 378–385 (GATGAGKS) is a binding site for ATP.

The protein belongs to the ABC transporter superfamily. Beta-(1--&gt;2)glucan exporter (TC 3.A.1.108.1) family. Homodimer.

The protein resides in the cell inner membrane. The enzyme catalyses [(1-&gt;2)-beta-D-glucosyl](n)(in) + ATP + H2O = [(1-&gt;2)-beta-D-glucosyl](n)(out) + ADP + phosphate + H(+). Functionally, involved in beta-(1--&gt;2)glucan export. Transmembrane domains (TMD) form a pore in the inner membrane and the ATP-binding domain (NBD) is responsible for energy generation. This is Beta-(1--&gt;2)glucan export ATP-binding/permease protein NdvA from Rhodopseudomonas palustris (strain BisB5).